Reading from the N-terminus, the 203-residue chain is Large ribosomal subunit protein uL6 (203 aa).

It belongs to the universal ribosomal protein uL6 family. As to quaternary structure, part of the 50S ribosomal subunit.

This protein binds to the 23S rRNA, and is important in its secondary structure. It is located near the subunit interface in the base of the L7/L12 stalk, and near the tRNA binding site of the peptidyltransferase center. This chain is Large ribosomal subunit protein uL6, found in Hyphomonas neptunium (strain ATCC 15444).